A 1762-amino-acid polypeptide reads, in one-letter code: Lysine-specific demethylase 3B (1762 aa).

Ala-2 bears the N-acetylalanine mark. Disordered regions lie at residues 253 to 350 (MDSS…FVPQ) and 426 to 468 (TTAS…NSSL). The segment covering 299 to 310 (ATKKLKGDRGEV) has biased composition (basic and acidic residues). Residues 426–435 (TTASSTPTTV) are compositionally biased toward low complexity. Positions 453–465 (GSWSQASGENSRN) are enriched in polar residues. Residues Ser-493, Ser-547, Ser-557, and Ser-561 each carry the phosphoserine modification. A disordered region spans residues 574 to 613 (SVLGADTQPGPKAGSSVDRKVPAESMPTLTPAFPRSLLNT). A Phosphothreonine modification is found at Thr-615. Residues 713-746 (TGSPSLSAVGNGRSSSPTNSLTQPIEMPTLSSSP) show a composition bias toward polar residues. The tract at residues 713–763 (TGSPSLSAVGNGRSSSPTNSLTQPIEMPTLSSSPTEERPTVGPGQQDNPLL) is disordered. 3 positions are modified to phosphoserine: Ser-767, Ser-774, and Ser-779. Lys-789 is covalently cross-linked (Glycyl lysine isopeptide (Lys-Gly) (interchain with G-Cter in SUMO2)). Ser-799 carries the phosphoserine modification. Residues 806-853 (ACRQDSDSSTNSDLSDLSDSEEQLQAKSGLKGIPEHLMGKLGPNGERS) form a disordered region. A C6-type zinc finger spans residues 1032–1057 (CDVCETTLFNIHWVCRKCGFGVCLDC). Polar residues predominate over residues 1146–1163 (QLPSVTPSASSGNETTFS). The interval 1146–1217 (QLPSVTPSAS…AIRPPCPDTA (72 aa)) is disordered. Phosphoserine occurs at positions 1254 and 1260. Residues 1285–1306 (SNSKTEGSSLRDLLHSGPGKLP) form a disordered region. Positions 1294 to 1298 (LRDLL) match the LXXLL motif motif. The 224-residue stretch at 1499 to 1722 (MPTRFEDLME…HCFRLTQEFR (224 aa)) folds into the JmjC domain. The Fe cation site is built by His-1561, Asp-1563, and His-1690.

Belongs to the JHDM2 histone demethylase family. It depends on Fe(2+) as a cofactor.

Its subcellular location is the nucleus. It catalyses the reaction N(6),N(6)-dimethyl-L-lysyl(9)-[histone H3] + 2 2-oxoglutarate + 2 O2 = L-lysyl(9)-[histone H3] + 2 formaldehyde + 2 succinate + 2 CO2. Histone demethylase that specifically demethylates 'Lys-9' of histone H3, thereby playing a central role in histone code. Demethylation of Lys residue generates formaldehyde and succinate May have tumor suppressor activity. This Mus musculus (Mouse) protein is Lysine-specific demethylase 3B (Kdm3b).